The primary structure comprises 546 residues: CTP synthase (546 aa).

The segment at 1 to 265 (MTKYVFVTGG…DEIVCHKLNI (265 aa)) is amidoligase domain. Serine 13 contacts CTP. Serine 13 contributes to the UTP binding site. Residues 14-19 (SLGKGI) and aspartate 71 each bind ATP. The Mg(2+) site is built by aspartate 71 and glutamate 139. CTP is bound by residues 146 to 148 (DIE), 186 to 191 (KTKPTQ), and lysine 222. UTP-binding positions include 186 to 191 (KTKPTQ) and lysine 222. The Glutamine amidotransferase type-1 domain occupies 290–543 (KIAFVGKYVD…VKAALANQKA (254 aa)). Glycine 351 contributes to the L-glutamine binding site. The active-site Nucleophile; for glutamine hydrolysis is the cysteine 378. Residues 379–382 (LGMQ), glutamate 402, and arginine 469 each bind L-glutamine. Active-site residues include histidine 516 and glutamate 518.

The protein belongs to the CTP synthase family. As to quaternary structure, homotetramer.

It carries out the reaction UTP + L-glutamine + ATP + H2O = CTP + L-glutamate + ADP + phosphate + 2 H(+). The enzyme catalyses L-glutamine + H2O = L-glutamate + NH4(+). The catalysed reaction is UTP + NH4(+) + ATP = CTP + ADP + phosphate + 2 H(+). Its pathway is pyrimidine metabolism; CTP biosynthesis via de novo pathway; CTP from UDP: step 2/2. With respect to regulation, allosterically activated by GTP, when glutamine is the substrate; GTP has no effect on the reaction when ammonia is the substrate. The allosteric effector GTP functions by stabilizing the protein conformation that binds the tetrahedral intermediate(s) formed during glutamine hydrolysis. Inhibited by the product CTP, via allosteric rather than competitive inhibition. Its function is as follows. Catalyzes the ATP-dependent amination of UTP to CTP with either L-glutamine or ammonia as the source of nitrogen. Regulates intracellular CTP levels through interactions with the four ribonucleotide triphosphates. The sequence is that of CTP synthase from Dechloromonas aromatica (strain RCB).